A 78-amino-acid polypeptide reads, in one-letter code: Large ribosomal subunit protein bL28 (78 aa).

The protein belongs to the bacterial ribosomal protein bL28 family.

The protein is Large ribosomal subunit protein bL28 of Erwinia tasmaniensis (strain DSM 17950 / CFBP 7177 / CIP 109463 / NCPPB 4357 / Et1/99).